The sequence spans 207 residues: Large ribosomal subunit protein uL4 (207 aa).

Residues 52-76 (KNTSLVSGGGKKPWKQKGTGRARQG) form a disordered region.

Belongs to the universal ribosomal protein uL4 family. In terms of assembly, part of the 50S ribosomal subunit.

Functionally, one of the primary rRNA binding proteins, this protein initially binds near the 5'-end of the 23S rRNA. It is important during the early stages of 50S assembly. It makes multiple contacts with different domains of the 23S rRNA in the assembled 50S subunit and ribosome. Its function is as follows. Forms part of the polypeptide exit tunnel. The polypeptide is Large ribosomal subunit protein uL4 (Myxococcus xanthus (strain DK1622)).